A 383-amino-acid polypeptide reads, in one-letter code: Queuine tRNA-ribosyltransferase (383 aa).

The active-site Proton acceptor is Asp-90. Substrate is bound by residues 90-94 (DSGGF), Asp-144, Gln-193, and Gly-227. Residues 258 to 264 (GVGTPED) form an RNA binding region. Catalysis depends on Asp-277, which acts as the Nucleophile. Residues 282-286 (TRNAR) are RNA binding; important for wobble base 34 recognition. Zn(2+) contacts are provided by Cys-315, Cys-317, Cys-320, and His-346.

It belongs to the queuine tRNA-ribosyltransferase family. As to quaternary structure, homodimer. Within each dimer, one monomer is responsible for RNA recognition and catalysis, while the other monomer binds to the replacement base PreQ1. The cofactor is Zn(2+).

The catalysed reaction is 7-aminomethyl-7-carbaguanine + guanosine(34) in tRNA = 7-aminomethyl-7-carbaguanosine(34) in tRNA + guanine. Its pathway is tRNA modification; tRNA-queuosine biosynthesis. Catalyzes the base-exchange of a guanine (G) residue with the queuine precursor 7-aminomethyl-7-deazaguanine (PreQ1) at position 34 (anticodon wobble position) in tRNAs with GU(N) anticodons (tRNA-Asp, -Asn, -His and -Tyr). Catalysis occurs through a double-displacement mechanism. The nucleophile active site attacks the C1' of nucleotide 34 to detach the guanine base from the RNA, forming a covalent enzyme-RNA intermediate. The proton acceptor active site deprotonates the incoming PreQ1, allowing a nucleophilic attack on the C1' of the ribose to form the product. After dissociation, two additional enzymatic reactions on the tRNA convert PreQ1 to queuine (Q), resulting in the hypermodified nucleoside queuosine (7-(((4,5-cis-dihydroxy-2-cyclopenten-1-yl)amino)methyl)-7-deazaguanosine). This Ralstonia nicotianae (strain ATCC BAA-1114 / GMI1000) (Ralstonia solanacearum) protein is Queuine tRNA-ribosyltransferase.